The sequence spans 197 residues: Probable GTP-binding protein EngB (197 aa).

An EngB-type G domain is found at 22 to 195; that stretch reads ALPELALVGR…WQWIEERTGV (174 aa). GTP is bound by residues 30–37, 57–61, 75–78, 142–145, and 174–176; these read GRSNVGKS, GKTQT, DVPG, TKVD, and FSA. Residues S37 and T59 each coordinate Mg(2+).

The protein belongs to the TRAFAC class TrmE-Era-EngA-EngB-Septin-like GTPase superfamily. EngB GTPase family. Mg(2+) is required as a cofactor.

Necessary for normal cell division and for the maintenance of normal septation. This is Probable GTP-binding protein EngB from Limosilactobacillus fermentum (strain NBRC 3956 / LMG 18251) (Lactobacillus fermentum).